We begin with the raw amino-acid sequence, 1735 residues long: Cadherin-AgCad1 (1735 aa).

The signal sequence occupies residues 1-30 (MKCVASKFNMWLHLGWLLGLLLVLLPLVRC). At 31 to 1574 (QGWGEPRFET…ALTEADETLQ (1544 aa)) the chain is on the extracellular side. The interval 166 to 1456 (VTDCLFNVYH…KVYIVSESNR (1291 aa)) is extracellular domain (EC). 11 Cadherin domains span residues 171–273 (FNVY…PPIF), 280–378 (ERIM…IPEI), 379–498 (YMKP…VPKF), 499–620 (GRDE…PPQI), 621–757 (TLPR…APYF), 767–866 (SVKE…QPYH), 879–983 (EKIP…TPKL), 985–1109 (ELAA…TPSI), 1136–1235 (GSPL…EPTF), 1255–1350 (AEDP…PPVF), and 1351–1461 (QQRL…TFVF). 2 short sequence motifs (toxin-binding receptor motif) span residues 1344-1350 (NDNPPVF) and 1446-1456 (AKVYIVSESNR). The CR11-MPED, increases toxicity of activated Cry4B toxin, peptide alone is not toxic stretch occupies residues 1358 to 1569 (GITTNDRVPK…PLATEALTEA (212 aa)). Residues 1457-1569 (VTFVFLNSVE…PLATEALTEA (113 aa)) form a membrane-proximal EC domain (MPED) region. A helical membrane pass occupies residues 1575–1595 (IILIVVSAALAVLCVILFVAF). Residues 1596-1735 (FIKIRSLNRQ…ETDDELSHRF (140 aa)) are Cytoplasmic-facing. A compositionally biased stretch (polar residues) spans 1701-1719 (SLNPMANGTDKSNDGAPTS). The disordered stretch occupies residues 1701–1735 (SLNPMANGTDKSNDGAPTSNHKKLDETDDELSHRF). Positions 1722 to 1735 (KKLDETDDELSHRF) are enriched in basic and acidic residues.

In terms of tissue distribution, larval midgut (at protein level).

Its subcellular location is the apical cell membrane. It is found in the cell projection. The protein resides in the microvillus membrane. Cadherins are calcium-dependent cell adhesion proteins. They preferentially interact with themselves in a homophilic manner in connecting cells. Its function is as follows. (Microbial infection) Binds to and is probably the functional receptor for B.thuringiensis subsp. israelensis (Bti) insecticidal toxin Cry4B. Trichoplusia ni insect cells stably transfected with this protein become suspectible to Cry4B; cells undergo oncosis, they bleb and ruffle after 20-40 minutes, swell after 40-60 minutes and lyse after 90 minutes. Following toxin treatment in the T.in insect system levels of intracellular 3',5'-cyclic AMP (cAMP) rise 12.5-fold; EDTA but not EGTA pretreatment prevents cAMP increase. Inorganic phosphate also rises 3.4-fold after toxin treatment. This is Cadherin-AgCad1 from Anopheles gambiae (African malaria mosquito).